The sequence spans 342 residues: MSAFTPASEVLLRHSDDFESARVLFAGDLQDDLPARLDTAASRAHTQQFHHWQVLNRQMGDTVRFSLVAEAADVAECDTLIYYWPKNKPEAQFQLMNLLSLLPVGSDIFVVGENRSGVRSAEQMLAEYAPLNKVDSARRCGLYHGRLEKQPTFDADAFWGEYTLDNLTIKTLPGVFSRDGLDVGSQLLLSTLEPHTKGKVLDVGCGAGVLAAALASHSPKVRLTLCDVSAPAVEASRATLAANGLAGDVFASNVFSEVNGRFDMIISNPPFHDGLQTSLEAAQALIRGAVRHLNSGGELRIVANAFLPYPQVLDETFGFHEVIAQTGRFKVYRTIMTRQAKK.

This sequence belongs to the methyltransferase superfamily. RsmC family. Monomer.

It is found in the cytoplasm. The enzyme catalyses guanosine(1207) in 16S rRNA + S-adenosyl-L-methionine = N(2)-methylguanosine(1207) in 16S rRNA + S-adenosyl-L-homocysteine + H(+). Functionally, specifically methylates the guanine in position 1207 of 16S rRNA in the 30S particle. The protein is Ribosomal RNA small subunit methyltransferase C of Klebsiella pneumoniae subsp. pneumoniae (strain ATCC 700721 / MGH 78578).